A 317-amino-acid chain; its full sequence is Transcription factor EC (317 aa).

Residues 1 to 44 (MTLDHQILNQSFKRSHPPTPSSELLVQHGHPSPESDTGLTGNPL) are disordered. The segment at 1 to 90 (MTLDHQILNQ…GLTSASCPSS (90 aa)) is necessary for transcriptional transactivation. A compositionally biased stretch (polar residues) spans 34-43 (ESDTGLTGNP). In terms of domain architecture, bHLH spans 110-163 (QKKDNHNLIERRRRYNINYRIKELGTLIPKSNDPDMRWNKGTILKASVEYIKWL). The tract at residues 241–317 (TSPELCDQAM…SFSSEDGDEL (77 aa)) is necessary for transcriptional transactivation. The tract at residues 297 to 317 (PAVSKESSRRSSFSSEDGDEL) is disordered.

Belongs to the MiT/TFE family. As to quaternary structure, homodimer. Forms heterodimers with MITF and TFE3. Interacts with MITF.

The protein localises to the nucleus. Transcriptional regulator that acts as a repressor or an activator. Acts as a transcriptional repressor on minimal promoter containing element F (that includes an E-box sequence). Binds to element F in an E-box sequence-specific manner. Acts as a transcriptional transactivator on the proximal promoter region of the tartrate-resistant acid phosphatase (TRAP) E-box containing promoter. Collaborates with MITF in target gene activation. Acts as a transcriptional repressor on minimal promoter containing mu E3 enhancer sequence. Binds to mu E3 DNA sequence of the immunoglobulin heavy-chain gene enhancer. Binds DNA in a homo- or heterodimeric form. In Bos taurus (Bovine), this protein is Transcription factor EC (TFEC).